The chain runs to 525 residues: GMP synthase [glutamine-hydrolyzing] (525 aa).

The Glutamine amidotransferase type-1 domain occupies 8 to 207 (KILILDFGSQ…ALEICGCPAN (200 aa)). Cys-85 functions as the Nucleophile in the catalytic mechanism. Active-site residues include His-181 and Glu-183. In terms of domain architecture, GMPS ATP-PPase spans 208-400 (WKPSSIIEDA…LGLPYDMLYR (193 aa)). 235-241 (SGGVDSS) contacts ATP.

In terms of assembly, homodimer.

It catalyses the reaction XMP + L-glutamine + ATP + H2O = GMP + L-glutamate + AMP + diphosphate + 2 H(+). It functions in the pathway purine metabolism; GMP biosynthesis; GMP from XMP (L-Gln route): step 1/1. In terms of biological role, catalyzes the synthesis of GMP from XMP. This chain is GMP synthase [glutamine-hydrolyzing], found in Shewanella pealeana (strain ATCC 700345 / ANG-SQ1).